The following is a 91-amino-acid chain: ATP synthase subunit c (91 aa).

A run of 2 helical transmembrane segments spans residues 4 to 24 (FTMC…GTGI) and 53 to 73 (IGLA…LIIL).

Belongs to the ATPase C chain family. F-type ATPases have 2 components, F(1) - the catalytic core - and F(0) - the membrane proton channel. F(1) has five subunits: alpha(3), beta(3), gamma(1), delta(1), epsilon(1). F(0) has three main subunits: a(1), b(2) and c(10-14). The alpha and beta chains form an alternating ring which encloses part of the gamma chain. F(1) is attached to F(0) by a central stalk formed by the gamma and epsilon chains, while a peripheral stalk is formed by the delta and b chains.

It localises to the cell inner membrane. Its function is as follows. F(1)F(0) ATP synthase produces ATP from ADP in the presence of a proton or sodium gradient. F-type ATPases consist of two structural domains, F(1) containing the extramembraneous catalytic core and F(0) containing the membrane proton channel, linked together by a central stalk and a peripheral stalk. During catalysis, ATP synthesis in the catalytic domain of F(1) is coupled via a rotary mechanism of the central stalk subunits to proton translocation. Functionally, key component of the F(0) channel; it plays a direct role in translocation across the membrane. A homomeric c-ring of between 10-14 subunits forms the central stalk rotor element with the F(1) delta and epsilon subunits. The protein is ATP synthase subunit c of Citrifermentans bemidjiense (strain ATCC BAA-1014 / DSM 16622 / JCM 12645 / Bem) (Geobacter bemidjiensis).